Consider the following 115-residue polypeptide: MKPGIHPEYREIVFVDVSNNFSFKTRSTMATKETIKWEDGNEYPLAKIETSSESHPFYTGTQKIMDTAGRVEKFRQKFGSKAVAKASGDGAAKTAEKKAAAAEAKAAEKPVKKKA.

This sequence belongs to the bacterial ribosomal protein bL31 family. Type B subfamily. In terms of assembly, part of the 50S ribosomal subunit.

This chain is Large ribosomal subunit protein bL31B, found in Polynucleobacter necessarius subsp. necessarius (strain STIR1).